The sequence spans 427 residues: MTDFAFDAPTVIRTKRDGGRLSDAAIDWVVKAYTDGRVADEQMSALLMAIVWRGMDRGEIARWTAAMLASGARLDFTDLPLATVDKHSTGGVGDKITLPLVPVVAACGGAVPQASGRGLGHTGGTLDKLESITGFTANLSNQRVREQLCDVGAAIFAAGQLAPADAKLYALRDITGTVESLPLIASSIMSKKLAEGAGALVLDVKVGSGAFMRSPVQARELAHTMVELGAAHGVPTRALLTEMNCPLGRTVGNALEVAEALEVLAGGGPPDVVELTLRLAGEMLELAGIHGRDPAQTLRDGTAMDRFRRLVAAQGGDLSKPLPIGSHSETVTAGASGTMGDIDAMAVGLAAWRLGAGRSRPGARVQHGAGVRIHRRPGEPVVVGEPLFTLYTNAPERFGAARAELAGGWSIRDSPPQVRPLIVDRIV.

The protein belongs to the thymidine/pyrimidine-nucleoside phosphorylase family. As to quaternary structure, homodimer.

It carries out the reaction thymidine + phosphate = 2-deoxy-alpha-D-ribose 1-phosphate + thymine. The enzymes which catalyze the reversible phosphorolysis of pyrimidine nucleosides are involved in the degradation of these compounds and in their utilization as carbon and energy sources, or in the rescue of pyrimidine bases for nucleotide synthesis. In Mycobacterium tuberculosis (strain CDC 1551 / Oshkosh), this protein is Thymidine phosphorylase (deoA).